The sequence spans 391 residues: Suppressor APC domain-containing protein 2 (391 aa).

The segment at 1–20 is disordered; it reads MAVAAMAERGRLSHAAPAPS. Thr-218 is modified (phosphothreonine). Positions 226-277 form a coiled coil; the sequence is SLLKQMKELDQEQEVLLQGLEMMARGRDWYQQQLQRVQERQRRLSQSRAAAD. Ser-283 is modified (phosphoserine). Positions 340–381 form a coiled coil; it reads LKEQNRLLTQEVTDKSERITQLEQEKSALIKQLFEARALSQQ.

Interacts with a spindle orientation complex at least composed of GNAI1, GPSM2 and NUMA1. Interacts with GPSM2 (via TPR motifs); this interaction is required to prevent GPSM2 anchoring at the mitotic apical cortex and is inhibited in presence of NUMA1 in a dose dependent manner. Interacts with PARD3. Expressed in the retina. Expressed in retinal progenitor cells and newly differentiated neurons but not in mature retinal cells (at protein level).

Its subcellular location is the cytoplasm. It localises to the nucleus. The protein resides in the cell cortex. The protein localises to the apical cell membrane. It is found in the cell junction. Its subcellular location is the tight junction. Its function is as follows. Plays a role in planar mitotic spindle orientation in retinal progenitor cells (RPCs) and promotes the production of symmetric terminal divisions. Negatively regulates the mitotic apical cortex localization of GPSM2. Involved also in positive regulation of cell proliferation and tumor cell growth. In Mus musculus (Mouse), this protein is Suppressor APC domain-containing protein 2.